Reading from the N-terminus, the 182-residue chain is NADH-quinone oxidoreductase subunit C 2 (182 aa).

A disordered region spans residues 153-182 (YKDKLNPFGAEGPPPTQPDLATNDIPQGGR).

This sequence belongs to the complex I 30 kDa subunit family. As to quaternary structure, NDH-1 is composed of 14 different subunits. Subunits NuoB, C, D, E, F, and G constitute the peripheral sector of the complex.

The protein localises to the cell inner membrane. The catalysed reaction is a quinone + NADH + 5 H(+)(in) = a quinol + NAD(+) + 4 H(+)(out). NDH-1 shuttles electrons from NADH, via FMN and iron-sulfur (Fe-S) centers, to quinones in the respiratory chain. The immediate electron acceptor for the enzyme in this species is believed to be ubiquinone. Couples the redox reaction to proton translocation (for every two electrons transferred, four hydrogen ions are translocated across the cytoplasmic membrane), and thus conserves the redox energy in a proton gradient. The sequence is that of NADH-quinone oxidoreductase subunit C 2 from Rhizobium meliloti (strain 1021) (Ensifer meliloti).